A 2146-amino-acid polypeptide reads, in one-letter code: Conidial pigment polyketide synthase alb1 (2146 aa).

Residues 8 to 244 (YLFGDQTISC…KAPGVSGPYH (237 aa)) are N-terminal acylcarrier protein transacylase domain (SAT). Residues 375-806 (RSKIAIIGMS…GGNTALLMED (432 aa)) form the Ketosynthase family 3 (KS3) domain. Active-site for beta-ketoacyl synthase activity residues include Cys547, His682, and His724. Residues 911-1232 (GFVFTGQGAQ…LSTLHLAGVE (322 aa)) are malonyl-CoA:ACP transacylase (MAT) domain. The active-site For acyl/malonyl transferase activity is the Ser1001. The interval 1290–1602 (TTAAQKIVEC…ARKILDTVLP (313 aa)) is product template (PT) domain. The segment at 1294–1427 (QKIVECREDG…VKLFNCAERE (134 aa)) is N-terminal hotdog fold. The 305-residue stretch at 1294-1598 (QKIVECREDG…FQALARKILD (305 aa)) folds into the PKS/mFAS DH domain. Catalysis depends on His1326, which acts as the Proton acceptor; for dehydratase activity. A C-terminal hotdog fold region spans residues 1453 to 1598 (AHRMQRGMVY…FQALARKILD (146 aa)). The active-site Proton donor; for dehydratase activity is Asp1511. The segment at 1611-1644 (GAPAPAPARPIGEKKAPPPIKVTGPPKPNPSNAR) is disordered. A compositionally biased stretch (pro residues) spans 1627–1639 (PPPIKVTGPPKPN). Residues 1647–1721 (SPVVARALEI…DFKAYLAEKG (75 aa)) enclose the Carrier 1 domain. At Ser1681 the chain carries O-(pantetheine 4'-phosphoryl)serine. The disordered stretch occupies residues 1724–1769 (DSSSPEPSSEPESKFSFNSDASSEASSGLTTPGITSPVKHEAPKGG). Low complexity predominate over residues 1738–1750 (FSFNSDASSEASS). Residues 1768–1845 (GGQNKVWKSI…AVQAALDLKP (78 aa)) form the Carrier 2 domain. Residue Ser1805 is modified to O-(pantetheine 4'-phosphoryl)serine. A claisen cyclase domain region spans residues 1892 to 2019 (KLFMFPDGSG…SIGLFGDGKR (128 aa)). Catalysis depends on Ser1962, which acts as the For Claisen cyclase activity.

The protein localises to the endosome. The enzyme catalyses 6 malonyl-CoA + acetyl-CoA + 6 H(+) = naphtopyrone YWA1 + 6 CO2 + 7 CoA + H2O. It functions in the pathway pigment biosynthesis; melanin biosynthesis. Functionally, non-reducing polyketide synthase; part of the gene cluster that mediates the biosynthesis of dihydroxynaphthalene (DHN)-melanin, a bluish-green pigment and a structural component of the conidial wall. The first step of the pathway is the production of the heptaketide naphtopyrone YWA1 by the polyketide synthase alb1 though condensation of acetyl-CoA with malonyl-CoA. The naphtopyrone YWA1 is then converted to the pentaketide 1,3,6,8-tetrahydroxynaphthalene (1,3,6,8-THN) by the heptaketide hydrolyase ayg1 though chain-length shortening. 1,3,6,8-THN is substrate of the hydroxynaphthalene reductase arp2 to yield scytalone. The scytalone dehydratase arp1 then reduces scytalone to 1,3,8-THN. 1,3,8-THN is also substrate of the hydroxynaphthalene reductase arp2 to yield vermelone. Vermelone is further converted by the multicopper oxidase abr1 to 1,8-DHN. Finally the laccase abr2 transforms 1,8-DHN to DHN-melanin. DHN-melanin biosynthesis appears to be initiated in endosomes where early enzymes (abl1, ayg1, arp1 and arp2) localize, with exocytosis leading to melanin deposition on the cell surface where late enzymes (abr1 and abr2) localize. DHN-melanin is an important structural component of the outer cell wall and is required for the presence of conidial surface hydrophobins. DHN-melanin also plays a crucial role in fungal virulence, including a protective role against the host's immune defenses. DHN-melanin protects also conidia against amoeba predation. This chain is Conidial pigment polyketide synthase alb1, found in Aspergillus fumigatus (strain ATCC MYA-4609 / CBS 101355 / FGSC A1100 / Af293) (Neosartorya fumigata).